The sequence spans 870 residues: Glycerol-3-phosphate acyltransferase (870 aa).

Residues 1–27 (MPKKNSPLLPKETTPTQSSVDTSGSSN) are disordered. Positions 13–27 (TTPTQSSVDTSGSSN) are enriched in polar residues. An HXXXXD motif motif is present at residues 351–356 (HRSHID).

It belongs to the GPAT/DAPAT family.

The protein resides in the cell inner membrane. The catalysed reaction is sn-glycerol 3-phosphate + an acyl-CoA = a 1-acyl-sn-glycero-3-phosphate + CoA. The protein operates within phospholipid metabolism; CDP-diacylglycerol biosynthesis; CDP-diacylglycerol from sn-glycerol 3-phosphate: step 1/3. This chain is Glycerol-3-phosphate acyltransferase (plsB), found in Xylella fastidiosa (strain 9a5c).